The following is a 433-amino-acid chain: MAKIVKVIGREIIDSRGNPTVEAEVHLEGGFVGLAAAPSGASTGSREALELRDGDKARFLGKGVLKAVSAVNNEIATALVGKEASNQAEIDQIMIELDGTENKSKFGANAILAVSLANAKAAAASKGMPLYAWIAELNGTPGVYSMPLPMMNIINGGEHADNNVDIQEFMIQPVGAKTLKEALRIGAEVFHNLAKVLKGKGLSTAVGDEGGFAPNLESNAAALACIKEAVEKAGYVLGKDVTLAMDCASSEFYNKENGMYEMKGEGKSFTSQEFTHYLEGLCKEYPIVSIEDGQDESDWDGFAYQTKVLGDKVQLVGDDLFVTNTKILKEGIEKGIANSILIKFNQIGSLTETLAAIKMAKDAGYTAVISHRSGETEDATIADLAVGTAAGQIKTGSMSRSDRIAKYNQLIRIEEALGEKAPFLGLKAVKGQA.

Gln-167 contributes to the (2R)-2-phosphoglycerate binding site. Glu-209 serves as the catalytic Proton donor. Positions 246, 291, and 318 each coordinate Mg(2+). 4 residues coordinate (2R)-2-phosphoglycerate: Lys-343, Arg-372, Ser-373, and Lys-394. Lys-343 acts as the Proton acceptor in catalysis.

Belongs to the enolase family. Component of the RNA degradosome, a multiprotein complex involved in RNA processing and mRNA degradation. The cofactor is Mg(2+).

The protein resides in the cytoplasm. It localises to the secreted. Its subcellular location is the cell surface. It catalyses the reaction (2R)-2-phosphoglycerate = phosphoenolpyruvate + H2O. It participates in carbohydrate degradation; glycolysis; pyruvate from D-glyceraldehyde 3-phosphate: step 4/5. Catalyzes the reversible conversion of 2-phosphoglycerate (2-PG) into phosphoenolpyruvate (PEP). It is essential for the degradation of carbohydrates via glycolysis. This chain is Enolase, found in Histophilus somni (strain 129Pt) (Haemophilus somnus).